Here is a 104-residue protein sequence, read N- to C-terminus: L-rhamnose mutarotase (104 aa).

Y18 is a binding site for substrate. H22 (proton donor) is an active-site residue. Residues Y41 and 76 to 77 each bind substrate; that span reads WW.

This sequence belongs to the rhamnose mutarotase family. Homodimer.

It is found in the cytoplasm. It catalyses the reaction alpha-L-rhamnose = beta-L-rhamnose. It participates in carbohydrate metabolism; L-rhamnose metabolism. Functionally, involved in the anomeric conversion of L-rhamnose. The chain is L-rhamnose mutarotase from Clostridium beijerinckii (strain ATCC 51743 / NCIMB 8052) (Clostridium acetobutylicum).